The following is a 291-amino-acid chain: Mitochondrial citrate transporter B (291 aa).

Solcar repeat units follow at residues Pro10 to Ser97, Leu105 to Ser193, and Pro201 to Leu283. Transmembrane regions (helical) follow at residues Leu16–Ala36, Ser74–Ile94, Val112–Ile132, Thr172–Glu192, Leu203–Ala220, and Phe255–Val276.

Belongs to the mitochondrial carrier (TC 2.A.29) family.

Its subcellular location is the mitochondrion inner membrane. The enzyme catalyses citrate(in) + H(+)(in) = citrate(out) + H(+)(out). Its function is as follows. Mitochondrial transporter that mediates citrate export from mitochondria to cytoplasm. Both ctpA, ctpB, and ctpD play important roles in citric acid transport across the mitochondrial membrane and function in a redundant manner. The chain is Mitochondrial citrate transporter B from Aspergillus niger (strain ATCC 1015 / CBS 113.46 / FGSC A1144 / LSHB Ac4 / NCTC 3858a / NRRL 328 / USDA 3528.7).